Reading from the N-terminus, the 207-residue chain is MPLFQNATFHISAHNLSDLPAPAGIEVVFAGRSNAGKSSALNTLANHNRLAFVSKQPGRTQLINFFSLGNDRFLVDLPGYGYAKVPEAVRKHWQLTLASYLSQRPCIGGLVLVMDCRHPLTPLDRQMLNWYSPSGKPIHALLTKADKLSRQAANQTLQQVRKELEASWGNCSVQLFSSLKKQGVEEAETVIGRWLFAPEDDVPDAVA.

The EngB-type G domain occupies 23–197 (AGIEVVFAGR…ETVIGRWLFA (175 aa)). Residues 31 to 38 (GRSNAGKS), 58 to 62 (GRTQL), 76 to 79 (DLPG), 143 to 146 (TKAD), and 176 to 178 (FSS) contribute to the GTP site. Serine 38 and threonine 60 together coordinate Mg(2+).

Belongs to the TRAFAC class TrmE-Era-EngA-EngB-Septin-like GTPase superfamily. EngB GTPase family. Mg(2+) is required as a cofactor.

Functionally, necessary for normal cell division and for the maintenance of normal septation. The polypeptide is Probable GTP-binding protein EngB (Methylobacillus flagellatus (strain ATCC 51484 / DSM 6875 / VKM B-1610 / KT)).